We begin with the raw amino-acid sequence, 1859 residues long: Protein TIC 214 (1859 aa).

The next 6 membrane-spanning stretches (helical) occupy residues 18–38, 64–84, 87–107, 124–144, 172–192, and 221–241; these read IINS…FSIG, FITG…HLAL, PHTI…WNNH, LSIQ…HFIL, VGWL…LFWI, and IFSI…PAPI. Residues 247–314 are disordered; sequence KETSKTEERG…TEEIRVNGKE (68 aa). Acidic residues predominate over residues 256–268; it reads GESEEERDVEIET. Over residues 273-284 the composition is skewed to basic and acidic residues; the sequence is KGTKQEQERSTE. Acidic residues predominate over residues 295–306; that stretch reads EKEDPDKIDETE.

Belongs to the TIC214 family. Part of the Tic complex.

The protein resides in the plastid. It is found in the chloroplast inner membrane. In terms of biological role, involved in protein precursor import into chloroplasts. May be part of an intermediate translocation complex acting as a protein-conducting channel at the inner envelope. This is Protein TIC 214 from Buxus microphylla (Littleleaf boxwood).